The sequence spans 742 residues: mRNA export factor ICP27 homolog (742 aa).

A compositionally biased stretch (basic and acidic residues) spans Met1–Ala11. The tract at residues Met1–Gln202 is disordered. Over residues Ser72–Arg85 the composition is skewed to basic residues. Basic and acidic residues predominate over residues Lys153–His171. A compositionally biased stretch (polar residues) spans Cys179–Gln202. Positions 387, 494, 496, and 501 each coordinate Zn(2+). A CHC2-type zinc finger spans residues Cys387–Cys501. Positions Ala540–Asp742 are disordered. Residues Tyr578 to His587 are compositionally biased toward basic and acidic residues. Positions Gly614–Ser626 are enriched in acidic residues. A compositionally biased stretch (polar residues) spans Gln692–Thr703.

Belongs to the HHV-1 ICP27 protein family. As to quaternary structure, self-associates and forms high-molecular-mass complexes. Interacts with host DDX39A and DDX39B; these interactions are required for UL69 function in mRNA export. Interacts with host SUPT6H, EIF4A1 and PABPC1. Post-translationally, phosphorylated by UL97 and host CDK1, CDK7 and CD9. Phosphorylation by CDKs impacts on UL69 nuclear localization and activity.

The protein localises to the virion tegument. The protein resides in the virion. It localises to the host nucleus. Its subcellular location is the host cytoplasm. Immediate early (EI) protein that plays many roles during productive infection including regulation of host cell cycle progression, regulation of viral gene expression or nuclear export of intronless viral RNAs. Acts as a transcriptional transactivator via interaction with the cellular transcription elongation factor SUPT6H and as a nuclear RNA export factor via interaction with UAP56, a component of the cellular mRNA export machinery. The polypeptide is mRNA export factor ICP27 homolog (Human cytomegalovirus (strain Merlin) (HHV-5)).